The chain runs to 356 residues: Thiamine thiazole synthase, chloroplastic (356 aa).

Residues 1 to 51 constitute a chloroplast transit peptide; that stretch reads MAAMASTAFAPSVSSTTNKLFDSSFHGAPMSPSLLRLQPIKSSRPNNLSIS. Substrate is bound by residues alanine 101, 121 to 122, glycine 129, and alanine 194; that span reads EQ. At cysteine 223 the chain carries 2,3-didehydroalanine (Cys). Residues aspartate 225, histidine 240, methionine 292, and 302–304 contribute to the substrate site; that span reads RMG.

It belongs to the THI4 family. Homooctamer. Fe cation is required as a cofactor. Post-translationally, during the catalytic reaction, a sulfide is transferred from Cys-223 to a reaction intermediate, generating a dehydroalanine residue.

The protein resides in the plastid. It localises to the chloroplast. It carries out the reaction [ADP-thiazole synthase]-L-cysteine + glycine + NAD(+) = [ADP-thiazole synthase]-dehydroalanine + ADP-5-ethyl-4-methylthiazole-2-carboxylate + nicotinamide + 3 H2O + 2 H(+). Functionally, involved in biosynthesis of the thiamine precursor thiazole. Catalyzes the conversion of NAD and glycine to adenosine diphosphate 5-(2-hydroxyethyl)-4-methylthiazole-2-carboxylic acid (ADT), an adenylated thiazole intermediate. The reaction includes an iron-dependent sulfide transfer from a conserved cysteine residue of the protein to a thiazole intermediate. The enzyme can only undergo a single turnover, which suggests it is a suicide enzyme. May have additional roles in adaptation to various stress conditions and in DNA damage tolerance. This Citrus sinensis (Sweet orange) protein is Thiamine thiazole synthase, chloroplastic.